The following is a 687-amino-acid chain: Geranylgeranyl transferase type-2 subunit alpha 2 (687 aa).

PFTA repeat units lie at residues 38 to 72 (YTKE…SRLD), 83 to 117 (IIDE…KKGH), 132 to 167 (YQKQ…LTKT), 168 to 203 (SEED…SLVA), and 214 to 248 (TIRR…QTVK). LRR repeat units lie at residues 523 to 545 (MNNI…VEKL), 546 to 567 (LFVQ…LEAM), 568 to 591 (QLLC…SLRH), 592 to 616 (LKQL…TTRY), and 646 to 668 (LMKL…EFSS).

The protein belongs to the protein prenyltransferase subunit alpha family. As to quaternary structure, heterotrimer composed of the alpha subunit RGTA, the beta subunit RGTB and REP; within this trimer, RGTA and RGTB form the catalytic component, while REP mediates peptide substrate binding.

It carries out the reaction geranylgeranyl diphosphate + L-cysteinyl-[protein] = S-geranylgeranyl-L-cysteinyl-[protein] + diphosphate. With respect to regulation, the enzymatic reaction requires the aid of the Rab escort protein REP. Catalyzes the transfer of a geranylgeranyl moiety from geranylgeranyl diphosphate to both cysteines of Rab proteins with the C-terminal sequence -CCXX, CXXX, -XCCX and -XCXC, such as RABA1A, RABA2A, RABF2A and RABG2. Does not seem to be a functional Rab-GGT alpha subunit in vitro. The sequence is that of Geranylgeranyl transferase type-2 subunit alpha 2 from Arabidopsis thaliana (Mouse-ear cress).